We begin with the raw amino-acid sequence, 385 residues long: 4-hydroxy-3-methylbut-2-en-1-yl diphosphate synthase (flavodoxin) (385 aa).

Cys-280, Cys-283, Cys-315, and Glu-322 together coordinate [4Fe-4S] cluster.

The protein belongs to the IspG family. Requires [4Fe-4S] cluster as cofactor.

It catalyses the reaction (2E)-4-hydroxy-3-methylbut-2-enyl diphosphate + oxidized [flavodoxin] + H2O + 2 H(+) = 2-C-methyl-D-erythritol 2,4-cyclic diphosphate + reduced [flavodoxin]. Its pathway is isoprenoid biosynthesis; isopentenyl diphosphate biosynthesis via DXP pathway; isopentenyl diphosphate from 1-deoxy-D-xylulose 5-phosphate: step 5/6. In terms of biological role, converts 2C-methyl-D-erythritol 2,4-cyclodiphosphate (ME-2,4cPP) into 1-hydroxy-2-methyl-2-(E)-butenyl 4-diphosphate. The sequence is that of 4-hydroxy-3-methylbut-2-en-1-yl diphosphate synthase (flavodoxin) from Streptomyces griseus subsp. griseus (strain JCM 4626 / CBS 651.72 / NBRC 13350 / KCC S-0626 / ISP 5235).